Here is a 675-residue protein sequence, read N- to C-terminus: Protein PALS1 (675 aa).

Residues 1-345 (MTTSYMNGHV…QQIKPPPAKE (345 aa)) form a required for the correct localization of PALS1 and PATJ at cell-cell contacts and the normal formation of tight junctions and adherens junctions region. A phosphoserine mark is found at serine 14 and serine 25. Residues 21-140 (LDLASPEEYP…LKHIQHTLVD (120 aa)) form an interaction with PARD6B region. Residues 51-79 (RRSAQLERIRQQQEDMRRRREEEGKKQEL) are disordered. The segment covering 54-79 (AQLERIRQQQEDMRRRREEEGKKQEL) has biased composition (basic and acidic residues). A phosphoserine mark is found at serine 83 and serine 84. L27 domains follow at residues 120 to 177 (NILD…SKAS) and 179 to 235 (PFPL…MQLE). Positions 181–243 (PLIANVQDLV…LEPITDERVY (63 aa)) are interaction with LIN7C. A PDZ domain is found at 256–336 (IVRIEKARDI…TLTFVLIPSQ (81 aa)). The SH3 domain occupies 345–417 (ETVIHVKAHF…PGKSFQQQRE (73 aa)). One can recognise a Guanylate kinase-like domain in the interval 479-660 (KRPIILIGPQ…AYQELLRLIN (182 aa)). 486–493 (GPQNCGQN) lines the ATP pocket.

The protein belongs to the MAGUK family. In terms of assembly, heterodimer with MPP1. Forms a heterotrimeric complex composed of PALS1, LIN7B and PATJ; the N-terminal L27 domain of PALS1 interacts with the L27 domain of PATJ and the C-terminal L27 domain of PALS1 interacts with the L27 domain of LIN7B. Component of a complex composed of PALS1, CRB1 and MPP4. Component of a complex whose core is composed of ARHGAP17, AMOT, PALS1, PATJ and PARD3/PAR3. Component of a complex composed of PALS1, CRB1 and EPB41L5. Within the complex, interacts (via HOOK domain) with EPB41L5 (via FERM domain), and interacts with CRB1 (via intracellular domain). Component of a complex composed of PALS1, MPP3 and CRB1; PALS1 acts as a bridging protein between MPP3 (via guanylate kinase-like domain) and CRB1. Component of a complex composed of CRB3, PALS1 and PATJ. As part of the Crumbs complex; interacts with WWP1, the interaction is enhanced by AMOTL2 and facilitates WWP1 localization to the plasma membrane. The Crumbs complex promotes monoubiquitination of AMOTL2 by WWP1, which activates the Hippo signaling pathway. Interacts (via PDZ domain) with PATJ (via N-terminus). Interacts with EZR. Interacts (via PDZ domain) with CRB1 (via C-terminal ERLI motif). While the PDZ domain is sufficient for interaction with CRB1, the adjacent SH3 and guanylate kinase-like domains are likely to contribute to a high affinity interaction. Interacts with WWTR1/TAZ (via WW domain). Interacts with MPP7. Interacts (via PDZ domain) with CRB3 (via C-terminus). Interacts with LIN7C. Interacts with MPDZ. Interacts with PARD6B. Interacts with SC6A1. Interacts with CDH5; the interaction promotes PALS1 localization to cell junctions and is required for CDH5-mediated vascular lumen formation and endothelial cell. Interacts with NPHP1 (via coiled coil and SH3 domains). Interacts with NPHP4. Interacts with CRB2. As to expression, expressed in the retinal pigment epithelium (at protein level). Expressed in the vascular plexus of the retina (at protein level). In the brain, expressed in the dentate gyrus of hippocampus, striatum and cerebellum (at protein level). Expressed in the sciatic nerve (at protein level). Expressed in the kidney nephron (at protein level). Expressed in the lung, and heart. Expressed in placenta, brain, skeletal muscles, pancreas and liver.

The protein resides in the golgi apparatus. It is found in the cell membrane. Its subcellular location is the endomembrane system. It localises to the cell junction. The protein localises to the tight junction. The protein resides in the adherens junction. It is found in the cell projection. Its subcellular location is the axon. It localises to the perikaryon. The protein localises to the apical cell membrane. In terms of biological role, plays a role in tight junction biogenesis and in the establishment of cell polarity in epithelial cells. Also involved in adherens junction biogenesis by ensuring correct localization of the exocyst complex protein EXOC4/SEC8 which allows trafficking of adherens junction structural component CDH1 to the cell surface. Plays a role through its interaction with CDH5 in vascular lumen formation and endothelial membrane polarity. Required during embryonic and postnatal retinal development. Required for the maintenance of cerebellar progenitor cells in an undifferentiated proliferative state, preventing premature differentiation, and is required for cerebellar histogenesis, fissure formation, cerebellar layer organization and cortical development. Plays a role in neuronal progenitor cell survival, potentially via promotion of mTOR signaling. Plays a role in the radial and longitudinal extension of the myelin sheath in Schwann cells. May modulate SC6A1/GAT1-mediated GABA uptake by stabilizing the transporter. May play a role in the T-cell receptor-mediated activation of NF-kappa-B. Required for localization of EZR to the apical membrane of parietal cells and may play a role in the dynamic remodeling of the apical cytoskeleton. Required for the normal polarized localization of the vesicular marker STX4. Required for the correct trafficking of the myelin proteins PMP22 and MAG. Involved in promoting phosphorylation and cytoplasmic retention of transcriptional coactivators YAP1 and WWTR1/TAZ which leads to suppression of TGFB1-dependent transcription of target genes such as CCN2/CTGF, SERPINE1/PAI1, SNAI1/SNAIL1 and SMAD7. The protein is Protein PALS1 of Mus musculus (Mouse).